A 481-amino-acid polypeptide reads, in one-letter code: 6-phosphogluconate dehydrogenase, decarboxylating (481 aa).

Residues 11-16, 34-36, 76-78, and N104 contribute to the NADP(+) site; these read GLAVMG, NRT, and VKA. Residues N104 and 130–132 contribute to the substrate site; that span reads SGG. The active-site Proton acceptor is the K184. 187 to 188 is a binding site for substrate; that stretch reads HN. The active-site Proton donor is E191. 5 residues coordinate substrate: Y192, K259, R286, R445, and H451.

It belongs to the 6-phosphogluconate dehydrogenase family. Homodimer.

The catalysed reaction is 6-phospho-D-gluconate + NADP(+) = D-ribulose 5-phosphate + CO2 + NADPH. Its pathway is carbohydrate degradation; pentose phosphate pathway; D-ribulose 5-phosphate from D-glucose 6-phosphate (oxidative stage): step 3/3. Functionally, catalyzes the oxidative decarboxylation of 6-phosphogluconate to ribulose 5-phosphate and CO(2), with concomitant reduction of NADP to NADPH. This Ceratitis capitata (Mediterranean fruit fly) protein is 6-phosphogluconate dehydrogenase, decarboxylating (Pgd).